Reading from the N-terminus, the 470-residue chain is MTKTLPEDFIFGGATAAYQAEGATNTDGKGRVAWDTYLEENYWYTAEPASDFYNRYPVDLELSEKFGVNGIRISIAWSRIFPNGYGEVNPKGVEYYHKLFAECHKRHVEPFVTLHHFDTPEVLHKDGDFLNRKTIDYFVDYAEYCFKEFPEVKYWTTFNEIGPIGDGQYLVGKFPPGIKYDFEKVFQSHHNMMVAHARAVKLFKDGGYQGEIGVVHALPTKYPFDPSNPEDVRAAELEDIIHNKFILDATYLGKYSRETMEGVQHILSVNGGKLNITDEDYAILDAAKDLNDFLGINYYMSDWMRGYDGESEITHNATGDKGGSKYQLKGVGQREFDVDVPRTDWDWMIYPQGLYDQIMRVVKDYPNYHKIYITENGLGYKDEFIESEKTVHDDARIDYVRQHLNVIADAIKDGANVKGYFIWSLMDVFSWSNGYEKRYGLFYVDFETQERYPKKSAYWYKELAETKEIK.

Residues Gln19, His116, Asn159, Glu160, and Asn297 each coordinate D-galactose 6-phosphate. Glu160 functions as the Proton donor in the catalytic mechanism. Glu375 serves as the catalytic Nucleophile. D-galactose 6-phosphate contacts are provided by Ser430, Trp431, Lys437, and Tyr439.

Belongs to the glycosyl hydrolase 1 family.

It carries out the reaction a 6-phospho-beta-D-galactoside + H2O = D-galactose 6-phosphate + an alcohol. It functions in the pathway carbohydrate metabolism; lactose degradation; D-galactose 6-phosphate and beta-D-glucose from lactose 6-phosphate: step 1/1. The protein is 6-phospho-beta-galactosidase of Staphylococcus aureus (strain Mu3 / ATCC 700698).